The chain runs to 336 residues: Peroxidase 11 (336 aa).

Residues 1–20 (MMRLLFVFFMVHTIFIPCFS) form the signal peptide. 4 cysteine pairs are disulfide-bonded: cysteine 39/cysteine 119, cysteine 72/cysteine 77, cysteine 125/cysteine 331, and cysteine 204/cysteine 236. Residue histidine 70 is the Proton acceptor of the active site. Ca(2+) contacts are provided by aspartate 71, valine 74, glycine 76, aspartate 78, and serine 80. Proline 167 is a substrate binding site. A heme b-binding site is contributed by histidine 197. Threonine 198 serves as a coordination point for Ca(2+). Residue asparagine 246 is glycosylated (N-linked (GlcNAc...) asparagine). Residues aspartate 251, threonine 254, and aspartate 259 each coordinate Ca(2+).

It belongs to the peroxidase family. Classical plant (class III) peroxidase subfamily. Requires heme b as cofactor. The cofactor is Ca(2+). Expressed in roots and stems.

It localises to the secreted. It carries out the reaction 2 a phenolic donor + H2O2 = 2 a phenolic radical donor + 2 H2O. Its function is as follows. Removal of H(2)O(2), oxidation of toxic reductants, biosynthesis and degradation of lignin, suberization, auxin catabolism, response to environmental stresses such as wounding, pathogen attack and oxidative stress. These functions might be dependent on each isozyme/isoform in each plant tissue. The sequence is that of Peroxidase 11 (PER11) from Arabidopsis thaliana (Mouse-ear cress).